The sequence spans 428 residues: 3-phosphoshikimate 1-carboxyvinyltransferase (428 aa).

K23, S24, and R28 together coordinate 3-phosphoshikimate. K23 contributes to the phosphoenolpyruvate binding site. G97 and R125 together coordinate phosphoenolpyruvate. Positions 170, 171, 172, 198, 314, 337, and 341 each coordinate 3-phosphoshikimate. Q172 provides a ligand contact to phosphoenolpyruvate. The Proton acceptor role is filled by D314. R345, R387, and K412 together coordinate phosphoenolpyruvate.

It belongs to the EPSP synthase family. In terms of assembly, monomer.

The protein resides in the cytoplasm. The enzyme catalyses 3-phosphoshikimate + phosphoenolpyruvate = 5-O-(1-carboxyvinyl)-3-phosphoshikimate + phosphate. Its pathway is metabolic intermediate biosynthesis; chorismate biosynthesis; chorismate from D-erythrose 4-phosphate and phosphoenolpyruvate: step 6/7. Catalyzes the transfer of the enolpyruvyl moiety of phosphoenolpyruvate (PEP) to the 5-hydroxyl of shikimate-3-phosphate (S3P) to produce enolpyruvyl shikimate-3-phosphate and inorganic phosphate. This Hamiltonella defensa subsp. Acyrthosiphon pisum (strain 5AT) protein is 3-phosphoshikimate 1-carboxyvinyltransferase.